The chain runs to 620 residues: Mitochondrial Rho GTPase 2 (620 aa).

Residues 1-594 (MKRDVRILLL…ELHTTSFWLR (594 aa)) lie on the Cytoplasmic side of the membrane. The 167-residue stretch at 2 to 168 (KRDVRILLLG…FYYAQKAVLH (167 aa)) folds into the Miro 1 domain. Positions 16, 17, 18, and 19 each coordinate GTP. Residue Thr18 coordinates Mg(2+). Positions 35 and 57 each coordinate Mg(2+). A GTP-binding site is contributed by Ser59. Lys96 is covalently cross-linked (Glycyl lysine isopeptide (Lys-Gly) (interchain with G-Cter in ubiquitin)). Residues Asn118, Lys119, Asp121, Ala149, and Lys150 each coordinate GTP. Residue Lys119 forms a Glycyl lysine isopeptide (Lys-Gly) (interchain with G-Cter in ubiquitin) linkage. Lys164 is covalently cross-linked (Glycyl lysine isopeptide (Lys-Gly) (interchain with G-Cter in ubiquitin)). EF-hand domains follow at residues 184-219 (ACAQ…CFGH) and 304-339 (HGYQ…FPGP). Positions 197, 199, 201, 208, 317, 319, 321, and 328 each coordinate Ca(2+). A disordered region spans residues 340–364 (PWGPQLPRHRPHRGRSAAPARVPLP). The 164-residue stretch at 415 to 578 (RNVLLCKVLG…FARLATMATF (164 aa)) folds into the Miro 2 domain. GTP contacts are provided by Gly427, Gly429, Lys430, and Ser431. 2 residues coordinate Mg(2+): Ser431 and Glu473. GTP contacts are provided by Lys527, Asp529, and Cys558. A helical; Anchor for type IV membrane protein transmembrane segment spans residues 595–617 (VALGAVGAAVAAILSFSLYRVLV). The Mitochondrial intermembrane portion of the chain corresponds to 618-620 (KSR).

Belongs to the mitochondrial Rho GTPase family. As to quaternary structure, homodimer. Interacts with the kinesin-binding proteins TRAK1/OIP106 and TRAK2/GRIF1, forming a link between mitochondria and the trafficking apparatus of the microtubules. Interacts with ARMCX3. Found in a complex with KIF5B, OGT, RHOT1 and TRAK1. Post-translationally, ubiquitinated by PRKN in a PINK1-dependent manner, leading to its degradation.

The protein localises to the mitochondrion outer membrane. The enzyme catalyses GTP + H2O = GDP + phosphate + H(+). The catalysed reaction is ATP + H2O = ADP + phosphate + H(+). It carries out the reaction UTP + H2O = UDP + phosphate + H(+). In terms of biological role, atypical mitochondrial nucleoside-triphosphatase (NTPase) involved in mitochondrial trafficking. Probably involved in control of anterograde transport of mitochondria and their subcellular distribution. Can hydrolyze GTP, ATP and UTP. This chain is Mitochondrial Rho GTPase 2 (RHOT2), found in Sus scrofa (Pig).